The primary structure comprises 21 residues: Trypsin (21 aa).

The propeptide at 1–7 is activation peptide; that stretch reads FPIEEDK. The Peptidase S1 domain occupies 8–21; the sequence is IVGGYECPKHXVPW.

This sequence belongs to the peptidase S1 family.

It localises to the secreted. It is found in the extracellular space. It catalyses the reaction Preferential cleavage: Arg-|-Xaa, Lys-|-Xaa.. The polypeptide is Trypsin (Protopterus aethiopicus (Marbled lungfish)).